The sequence spans 907 residues: Probable ubiquitin-conjugating enzyme E2 24 (907 aa).

Disordered stretches follow at residues 1-23 (MEMS…EHEE) and 485-509 (SSTV…EASS). Polar residues predominate over residues 495–509 (QDLSQKISQSDEASS). One can recognise a UBC core domain in the interval 662-822 (SWVKKVQQEW…AFLITCKSMI (161 aa)). Cys748 serves as the catalytic Glycyl thioester intermediate.

This sequence belongs to the ubiquitin-conjugating enzyme family. Interacts with PHO1. Interacts with NLA. Expressed in the vascular tissues of cotyledons, leaves, roots, sepals, filaments, anthers and junctions between the inflorescence stems and siliques.

Its subcellular location is the golgi apparatus membrane. It is found in the endoplasmic reticulum membrane. The catalysed reaction is S-ubiquitinyl-[E1 ubiquitin-activating enzyme]-L-cysteine + [E2 ubiquitin-conjugating enzyme]-L-cysteine = [E1 ubiquitin-activating enzyme]-L-cysteine + S-ubiquitinyl-[E2 ubiquitin-conjugating enzyme]-L-cysteine.. It participates in protein modification; protein ubiquitination. E2 ubiquitin-protein ligase that mediates E1-dependent protein ubiquitination. Mediates PHO1 degradation through multivesicular body-mediated vacuolar proteolysis in response to inorganic phosphate (Pi) availability. Negatively regulates the protein abundance of PHF1 and PHT1s under Pi-sufficient conditions by facilitating the degradation of PHT1 proteins at the endomembrane. Functions cooperatively with NLA to regulate the abundance of the inorganic phosphate (Pi) transporters PHT1-1, PHT1-2 and PHT1-3 in different subcellular compartments. Regulates Pi homeostasis by mediating, cooperatively with NLA, polyubiquitination of PHT1-4 and its targeting for degradation. The polypeptide is Probable ubiquitin-conjugating enzyme E2 24 (Arabidopsis thaliana (Mouse-ear cress)).